The chain runs to 122 residues: UPF0102 protein CPF_1959 (122 aa).

It belongs to the UPF0102 family.

The chain is UPF0102 protein CPF_1959 from Clostridium perfringens (strain ATCC 13124 / DSM 756 / JCM 1290 / NCIMB 6125 / NCTC 8237 / Type A).